A 528-amino-acid chain; its full sequence is Chaperonin GroEL, chloroplastic (528 aa).

Residues 29–32 (TLGP), 86–90 (DGTTT), G414, 480–482 (DAA), and D496 contribute to the ATP site.

It belongs to the chaperonin (HSP60) family. Forms a cylinder of 14 subunits composed of two heptameric rings stacked back-to-back. Interacts with the co-chaperonin GroES.

The protein localises to the plastid. It is found in the chloroplast. The enzyme catalyses ATP + H2O + a folded polypeptide = ADP + phosphate + an unfolded polypeptide.. In terms of biological role, together with its co-chaperonin GroES, plays an essential role in assisting protein folding. The GroEL-GroES system forms a nano-cage that allows encapsulation of the non-native substrate proteins and provides a physical environment optimized to promote and accelerate protein folding. The sequence is that of Chaperonin GroEL, chloroplastic from Pyropia yezoensis (Susabi-nori).